A 754-amino-acid polypeptide reads, in one-letter code: ToMV susceptible protein tm-1(GCR26) (754 aa).

The N-terminal inhibitory domain NN stretch occupies residues 1 to 201 (MATAQSNSPR…AGMVIGRLES (201 aa)). ATP-binding positions include 18–20 (DTK), Thr55, Arg92, and 124–127 (GSGG). The segment at 211 to 431 (KFTVGVTMFG…VDSFLEMSPK (221 aa)) is N-terminal inhibitory domain NC.

It belongs to the UPF0261 family. Homodimer. In terms of assembly, (Microbial infection) Binds, via an ATP bridge, to the tobamoviruses avirulent (Avr) replication proteins (large and small subunits, e.g. tobacco mild green mosaic virus (TMGMV) AC P18339 and pepper mild mottle virus (PMMoV) AC P89657) to inhibit their function after the translation of tobamoviruses RNA, but before the viral replication complex formation on the membrane surfaces; this interaction is not possible with resistance-breaking strains replication proteins.

Inhibitor of viral RNA replication which confers resistance to some tobamoviruses including tobacco mild green mosaic virus (TMGMV) and pepper mild mottle virus (PMMoV), but not to tomato mosaic virus (ToMV strains L, ToMV0 and ToMV1-2) and tobacco mosaic virus (TMV). Prevents tobamoviruses RNA replication by affecting the association of tobamoviruses replication proteins (large and small subunits) with host membrane-associated proteins (e.g. TOM1, TOM2A and ARL8), thus inhibiting the replication complex formation on the membranes and avoiding viral negative-strand RNA synthesis. The sequence is that of ToMV susceptible protein tm-1(GCR26) from Solanum lycopersicum (Tomato).